A 423-amino-acid chain; its full sequence is Imidazolonepropionase (423 aa).

Fe(3+) is bound by residues His-78 and His-80. Residues His-78 and His-80 each coordinate Zn(2+). 4-imidazolone-5-propanoate contacts are provided by Arg-87, Tyr-150, and His-183. Tyr-150 lines the N-formimidoyl-L-glutamate pocket. His-247 contributes to the Fe(3+) binding site. His-247 contacts Zn(2+). Glu-250 provides a ligand contact to 4-imidazolone-5-propanoate. Asp-322 contacts Fe(3+). Residue Asp-322 coordinates Zn(2+). N-formimidoyl-L-glutamate contacts are provided by Asn-324 and Gly-326. Ser-327 provides a ligand contact to 4-imidazolone-5-propanoate.

This sequence belongs to the metallo-dependent hydrolases superfamily. HutI family. Zn(2+) is required as a cofactor. The cofactor is Fe(3+).

The protein localises to the cytoplasm. It carries out the reaction 4-imidazolone-5-propanoate + H2O = N-formimidoyl-L-glutamate. It participates in amino-acid degradation; L-histidine degradation into L-glutamate; N-formimidoyl-L-glutamate from L-histidine: step 3/3. In terms of biological role, catalyzes the hydrolytic cleavage of the carbon-nitrogen bond in imidazolone-5-propanoate to yield N-formimidoyl-L-glutamate. It is the third step in the universal histidine degradation pathway. This Bacillus anthracis (strain A0248) protein is Imidazolonepropionase.